Here is a 1098-residue protein sequence, read N- to C-terminus: NACHT, LRR and PYD domains-containing protein 5 (1098 aa).

Positions 1–97 (MREAKIAPLS…SEMARDEMKK (97 aa)) constitute a Pyrin domain. Residues 104-131 (SEDSAPTKTDQGPSMKEVPGPREDPQDS) form a disordered region. Basic and acidic residues predominate over residues 122–131 (PGPREDPQDS). The NACHT domain occupies 180–503 (LTVVLHGPPG…ALFYVLRGVE (324 aa)). 186 to 193 (GPPGVGKS) is an ATP binding site. 7 LRR repeats span residues 851 to 871 (GLTH…SLLC), 880 to 900 (GLQK…GFLA), 908 to 928 (HLTH…NLLC), 937 to 958 (PLRD…SLSN), 965 to 985 (RLRS…AALC), 993 to 1013 (TLTR…KALS), and 1021 to 1041 (HLAS…TTLC).

It belongs to the NLRP family. Component of the subcortical maternal complex (SCMC), at least composed of NLRP5, KHDC3, OOEP, and TLE6. Within the complex, interacts with OOEP, KHDC3 and TLE6. The SCMC may facilitate translocation of its components between the nuclear and cytoplasmic compartments. As part of the SCMC interacts with the SCMC-associated protein ZBED3. As part of the SCMC interacts with the SCMC-associated protein CFL1/Cofilin-1. Interacts with PRKCE. Interacts with TUBB3 at cytoskeleton microtubules. In terms of processing, phosphorylated by PRKCE. In terms of tissue distribution, oocyte-specific.

It localises to the cytoplasm. Its subcellular location is the cytoplasmic vesicle. The protein resides in the secretory vesicle. The protein localises to the cortical granule. It is found in the mitochondrion. It localises to the nucleus. Its subcellular location is the nucleolus. The protein resides in the golgi apparatus. Component of the subcortical maternal complex (SCMC), a multiprotein complex that plays a key role in early embryonic development. The SCMC complex is a structural constituent of cytoplasmic lattices, which consist in fibrous structures found in the cytoplasm of oocytes and preimplantation embryos. They are required to store maternal proteins critical for embryonic development, such as proteins that control epigenetic reprogramming of the preimplantation embryo, and prevent their degradation or activation. Required for the localization of cortical granules to the cortex of oocytes, via association with the cortical actin scaffold. Required for cortical actin clearance prior to oocyte exocytosis and prevention of polyspermy. Involved in regulating post-fertilization Ca(2+) release and endoplasmic reticulum storage (ER) storage via regulation of cellular localization. May be involved in the localization of mitochondria to the cytoplasm and perinuclear region in oocytes and early stage embryos, independent of its role in CPL formation. The sequence is that of NACHT, LRR and PYD domains-containing protein 5 (NLRP5) from Bos taurus (Bovine).